The following is a 419-amino-acid chain: GTPase Obg (419 aa).

Positions 1-156 (MRFVDYVSIE…FYLDLQLKVM (156 aa)) constitute an Obg domain. One can recognise an OBG-type G domain in the interval 157 to 334 (ADIGLVGKPN…LEEKQKKLEI (178 aa)). GTP contacts are provided by residues 163-170 (GKPNAGKS), 188-192 (FTTLV), 209-212 (DLPG), 278-281 (NKCD), and 315-317 (NII). Mg(2+) contacts are provided by S170 and T190. The 78-residue stretch at 342–419 (IEFNLKAPFL…RIYEFEFHWN (78 aa)) folds into the OCT domain.

This sequence belongs to the TRAFAC class OBG-HflX-like GTPase superfamily. OBG GTPase family. Monomer. The cofactor is Mg(2+).

It localises to the cytoplasm. An essential GTPase which binds GTP, GDP and possibly (p)ppGpp with moderate affinity, with high nucleotide exchange rates and a fairly low GTP hydrolysis rate. Plays a role in control of the cell cycle, stress response, ribosome biogenesis and in those bacteria that undergo differentiation, in morphogenesis control. The sequence is that of GTPase Obg from Mesomycoplasma hyopneumoniae (strain 232) (Mycoplasma hyopneumoniae).